A 98-amino-acid polypeptide reads, in one-letter code: NADH-ubiquinone oxidoreductase chain 4L (98 aa).

Helical transmembrane passes span 1–21, 29–49, and 61–81; these read MSLT…GLLM, SLLC…VTIL, and IILL…LVMV.

This sequence belongs to the complex I subunit 4L family. In terms of assembly, core subunit of respiratory chain NADH dehydrogenase (Complex I) which is composed of 45 different subunits.

It is found in the mitochondrion inner membrane. It carries out the reaction a ubiquinone + NADH + 5 H(+)(in) = a ubiquinol + NAD(+) + 4 H(+)(out). Functionally, core subunit of the mitochondrial membrane respiratory chain NADH dehydrogenase (Complex I) which catalyzes electron transfer from NADH through the respiratory chain, using ubiquinone as an electron acceptor. Part of the enzyme membrane arm which is embedded in the lipid bilayer and involved in proton translocation. The protein is NADH-ubiquinone oxidoreductase chain 4L (MT-ND4L) of Sturnira lilium (Lesser yellow-shouldered bat).